The sequence spans 109 residues: Thiosulfate sulfurtransferase GlpE (109 aa).

The 89-residue stretch at 16 to 104 (RSNGAVVVDI…WRATFPSETA (89 aa)) folds into the Rhodanese domain. Cysteine 64 functions as the Cysteine persulfide intermediate in the catalytic mechanism.

It belongs to the GlpE family.

The protein localises to the cytoplasm. The enzyme catalyses thiosulfate + hydrogen cyanide = thiocyanate + sulfite + 2 H(+). The catalysed reaction is thiosulfate + [thioredoxin]-dithiol = [thioredoxin]-disulfide + hydrogen sulfide + sulfite + 2 H(+). Transferase that catalyzes the transfer of sulfur from thiosulfate to thiophilic acceptors such as cyanide or dithiols. May function in a CysM-independent thiosulfate assimilation pathway by catalyzing the conversion of thiosulfate to sulfite, which can then be used for L-cysteine biosynthesis. This chain is Thiosulfate sulfurtransferase GlpE, found in Ectopseudomonas mendocina (strain ymp) (Pseudomonas mendocina).